The primary structure comprises 260 residues: uncharacterized protein (260 aa).

The N-terminal stretch at 1-22 (MGYLKRFALYISILVLIVMVAG) is a signal peptide. The N-palmitoyl cysteine moiety is linked to residue cysteine 23. The S-diacylglycerol cysteine moiety is linked to residue cysteine 23.

This sequence belongs to the staphylococcal tandem lipoprotein family.

Its subcellular location is the cell membrane. This is an uncharacterized protein from Staphylococcus aureus (strain bovine RF122 / ET3-1).